The chain runs to 400 residues: Glutamyl-tRNA reductase (400 aa).

Substrate is bound by residues 45-48 (TCNR), Ser103, 108-110 (EDQ), and Gln114. Cys46 serves as the catalytic Nucleophile. Residue 179 to 184 (GYGEIG) coordinates NADP(+).

It belongs to the glutamyl-tRNA reductase family. In terms of assembly, homodimer.

It catalyses the reaction (S)-4-amino-5-oxopentanoate + tRNA(Glu) + NADP(+) = L-glutamyl-tRNA(Glu) + NADPH + H(+). It participates in porphyrin-containing compound metabolism; protoporphyrin-IX biosynthesis; 5-aminolevulinate from L-glutamyl-tRNA(Glu): step 1/2. Functionally, catalyzes the NADPH-dependent reduction of glutamyl-tRNA(Glu) to glutamate 1-semialdehyde (GSA). This chain is Glutamyl-tRNA reductase, found in Clostridium perfringens (strain SM101 / Type A).